The sequence spans 71 residues: uncharacterized protein (71 aa).

Positions Met1 to Asn16 are enriched in basic residues. 2 disordered regions span residues Met1 to Lys39 and Lys51 to Ala71. Residues Arg25–Gly35 show a composition bias toward polar residues. The segment covering Lys51–Phe64 has biased composition (basic and acidic residues).

This is an uncharacterized protein from Bacillus subtilis (strain 168).